A 488-amino-acid chain; its full sequence is Probable malate:quinone oxidoreductase (488 aa).

This sequence belongs to the MQO family. It depends on FAD as a cofactor.

The enzyme catalyses (S)-malate + a quinone = a quinol + oxaloacetate. The protein operates within carbohydrate metabolism; tricarboxylic acid cycle; oxaloacetate from (S)-malate (quinone route): step 1/1. In Neisseria meningitidis serogroup C (strain 053442), this protein is Probable malate:quinone oxidoreductase.